We begin with the raw amino-acid sequence, 451 residues long: Proline--tRNA ligase (451 aa).

Belongs to the class-II aminoacyl-tRNA synthetase family. ProS type 2 subfamily. As to quaternary structure, homodimer.

Its subcellular location is the cytoplasm. It carries out the reaction tRNA(Pro) + L-proline + ATP = L-prolyl-tRNA(Pro) + AMP + diphosphate. Catalyzes the attachment of proline to tRNA(Pro) in a two-step reaction: proline is first activated by ATP to form Pro-AMP and then transferred to the acceptor end of tRNA(Pro). The chain is Proline--tRNA ligase from Ruegeria sp. (strain TM1040) (Silicibacter sp.).